We begin with the raw amino-acid sequence, 307 residues long: Serine/threonine-protein phosphatase PP2A-3 catalytic subunit (307 aa).

Mn(2+)-binding residues include aspartate 55, histidine 57, aspartate 83, and asparagine 115. The active-site Proton donor is the histidine 116. Mn(2+)-binding residues include histidine 165 and histidine 239.

The protein belongs to the PPP phosphatase family. PP-2A subfamily. The cofactor is Mn(2+).

The protein localises to the cytoplasm. It catalyses the reaction O-phospho-L-seryl-[protein] + H2O = L-seryl-[protein] + phosphate. It carries out the reaction O-phospho-L-threonyl-[protein] + H2O = L-threonyl-[protein] + phosphate. The sequence is that of Serine/threonine-protein phosphatase PP2A-3 catalytic subunit (PP2A3) from Oryza sativa subsp. indica (Rice).